An 82-amino-acid chain; its full sequence is Putative defensin-like protein 48 (82 aa).

The first 28 residues, 1–28, serve as a signal peptide directing secretion; sequence MGIKTLIIFFHIFILAVLSSNNIILTSG. Intrachain disulfides connect Cys-39–Cys-80, Cys-43–Cys-67, Cys-53–Cys-78, and Cys-57–Cys-79.

It belongs to the DEFL family.

It is found in the secreted. In Arabidopsis thaliana (Mouse-ear cress), this protein is Putative defensin-like protein 48.